Here is a 332-residue protein sequence, read N- to C-terminus: Fructose-1,6-bisphosphatase class 1 (332 aa).

Positions 89, 110, 112, and 113 each coordinate Mg(2+). Substrate contacts are provided by residues 113 to 116 (DGSS), N206, Y239, 257 to 259 (YLY), and K269. A Mg(2+)-binding site is contributed by E275.

The protein belongs to the FBPase class 1 family. As to quaternary structure, homotetramer. Requires Mg(2+) as cofactor.

It localises to the cytoplasm. The catalysed reaction is beta-D-fructose 1,6-bisphosphate + H2O = beta-D-fructose 6-phosphate + phosphate. It functions in the pathway carbohydrate biosynthesis; gluconeogenesis. In Citrobacter koseri (strain ATCC BAA-895 / CDC 4225-83 / SGSC4696), this protein is Fructose-1,6-bisphosphatase class 1.